The sequence spans 158 residues: Urease accessory protein UreE (158 aa).

This sequence belongs to the UreE family.

It localises to the cytoplasm. In terms of biological role, involved in urease metallocenter assembly. Binds nickel. Probably functions as a nickel donor during metallocenter assembly. This is Urease accessory protein UreE from Klebsiella pneumoniae (strain 342).